The following is a 1256-amino-acid chain: Protein flightless-1 (1256 aa).

LRR repeat units follow at residues 4–28, 29–51, 52–74, 75–99, 100–122, 124–145, 147–169, 171–192, 218–241, 243–264, 265–287, 289–312, 313–335, 336–358, and 360–381; these read LPFV…MRQM, SRVQ…LGHL, QKLE…LTEL, SCLR…LFHL, EELT…LERA, NLIV…LFIH, TDLL…TRRL, NLKT…QLPS, LANL…VYNV, TLVR…VELW, QRLE…LCKL, KLRR…IGKL, GALE…LCRC, GALK…IHLL, and GLDQ…PSEA. Residues 405–476 form a disordered region; the sequence is AAVPPSMPSS…ESLKPKRWDE (72 aa). The span at 431-476 shows a compositional bias: basic and acidic residues; sequence PRSEGDQDAAKVLKGMKDVAKDKDNEAGAVPEDGKPESLKPKRWDE. Gelsolin-like repeat units follow at residues 512 to 589, 633 to 703, 749 to 822, and 1168 to 1242; these read IEEV…EQFL, EPVA…AEFW, VELP…MQIF, and EKCA…SRRF.

The protein belongs to the villin/gelsolin family. Found in ovaries, larval fat bodies, brain and adult thorax.

In terms of biological role, may play a key role in embryonic cellularization by interacting with both the cytoskeleton and other cellular components. Alternatively, it may play a structural role in indirect flight muscle. Vital for embryonic development. In Drosophila melanogaster (Fruit fly), this protein is Protein flightless-1 (fliI).